A 174-amino-acid chain; its full sequence is Large ribosomal subunit protein uL16 (174 aa).

It belongs to the universal ribosomal protein uL16 family.

This Archaeoglobus fulgidus (strain ATCC 49558 / DSM 4304 / JCM 9628 / NBRC 100126 / VC-16) protein is Large ribosomal subunit protein uL16.